The primary structure comprises 406 residues: Zinc metalloprotease Rip1 (406 aa).

Residues 1-21 (MMFGIGIVLFALAILVSVALH) traverse the membrane as a helical segment. Position 21 (His-21) interacts with Zn(2+). Residue Glu-22 is part of the active site. His-25 lines the Zn(2+) pocket. The helical transmembrane segment at 108–128 (PAMNFVIGLVLIYGIAIVWGL) threads the bilayer. In terms of domain architecture, PDZ spans 125 to 209 (VWGLPNLHQP…RIEFKRDGRV (85 aa)). Asp-206 is a Zn(2+) binding site. 2 helical membrane-spanning segments follow: residues 327–349 (NFVL…IAVA) and 375–395 (LMPA…LTVT).

This sequence belongs to the peptidase M50B family. It depends on Zn(2+) as a cofactor.

The protein resides in the cell membrane. Proteolysis is inhibited by Wag31; when Wag31 is non-functional oxidative stress increases proteolysis. Its function is as follows. A probable intramembrane site-2 protease (S2P) that cleaves type-2 transmembrane proteins within their membrane-spanning domains. Degrades PbpB (PBP3, FtsI) under conditions of oxidatives stress; degradation is inhibited by Wag31-PbpB interaction. Also cleaves anti-sigma factors RskA, RslA and RslM. Site-1 proteases have not yet been identified in this organism. Functionally, regulated intramembrane proteolysis (RIP) occurs when an extracytoplasmic signal (possibly oxidative stress) triggers a concerted proteolytic cascade to transmit information and elicit cellular responses. The membrane-spanning regulatory substrate protein (includes anti-sigma factors RskA, RslA, RsmA, and PbpB) is first cut extracytoplasmically (site-1 protease, S1P), then within the membrane itself (site-2 protease, S2P, this entry), while cytoplasmic proteases finish degrading the regulatory protein, liberating the effector protein (ECF sigma factors SigK, SigL and SigM). The polypeptide is Zinc metalloprotease Rip1 (rip1) (Mycolicibacterium smegmatis (strain ATCC 700084 / mc(2)155) (Mycobacterium smegmatis)).